The primary structure comprises 389 residues: Oxytocin receptor (389 aa).

The segment at 1-27 is disordered; the sequence is MEGELAANWSTEAVNSSAAPPGAEGNC. At 1 to 38 the chain is on the extracellular side; that stretch reads MEGELAANWSTEAVNSSAAPPGAEGNCTAGPPRRNEAL. Residues Asn8, Asn15, and Asn26 are each glycosylated (N-linked (GlcNAc...) asparagine). Positions 8 to 18 are enriched in polar residues; that stretch reads NWSTEAVNSSA. A helical transmembrane segment spans residues 39–63; the sequence is ARVEVAVLCLILFLALSGNACVLLA. Topologically, residues 64–74 are cytoplasmic; it reads LRTTRHKHSRL. A helical membrane pass occupies residues 75 to 97; sequence FFFMKHLSIADLVVAVFQVLPQL. At 98 to 113 the chain is on the extracellular side; that stretch reads LWDITFRFYGPDLLCR. A disulfide bond links Cys112 and Cys187. Residues 114 to 135 form a helical membrane-spanning segment; it reads LVKYLQVVGMFASTYLLLLMSL. Topologically, residues 136–154 are cytoplasmic; it reads DRCLAICQPLRSLRRRTDR. Residues 155–175 traverse the membrane as a helical segment; that stretch reads LAVLATWLGCLVASAPQVHIF. The Extracellular segment spans residues 176-202; that stretch reads SLREVADGVFDCWAVFIQPWGPKAYIT. Residues 203–225 traverse the membrane as a helical segment; it reads WITLAVYIVPVIVLAACYGLISF. Residues 226–275 lie on the Cytoplasmic side of the membrane; that stretch reads KIWQNLRLKTAAAAAAEAPEGAAAGDGGRMALARVSSVKLISKAKIRTVK. Residues 276 to 294 traverse the membrane as a helical segment; that stretch reads MTFIIVLAFIVCWTPFFFV. Over 295 to 309 the chain is Extracellular; it reads QMWSVWDANAPKEAS. A helical membrane pass occupies residues 310–332; the sequence is AFIIVMLLASLNSCCNPWIYMLF. Over 333-389 the chain is Cytoplasmic; the sequence is TGHLFHELVQRFLCCSASYLKGNRLGETSTSKKSNSSSFVLSHRSSSQRSCSQPSTA. Residues 358–389 are disordered; that stretch reads GETSTSKKSNSSSFVLSHRSSSQRSCSQPSTA. Over residues 360-389 the composition is skewed to low complexity; that stretch reads TSTSKKSNSSSFVLSHRSSSQRSCSQPSTA. Phosphoserine occurs at positions 366 and 368.

The protein belongs to the G-protein coupled receptor 1 family. Vasopressin/oxytocin receptor subfamily.

It is found in the cell membrane. In terms of biological role, receptor for oxytocin. The activity of this receptor is mediated by G proteins which activate a phosphatidylinositol-calcium second messenger system. The sequence is that of Oxytocin receptor (OXTR) from Macaca mulatta (Rhesus macaque).